The primary structure comprises 474 residues: Cysteine--tRNA ligase (474 aa).

Residue cysteine 34 coordinates Zn(2+). Residues 36–46 (PTVYDYAHIGN) carry the 'HIGH' region motif. The Zn(2+) site is built by cysteine 219, histidine 244, and glutamate 248. The 'KMSKS' region motif lies at 276–280 (KMSKS). Residue lysine 279 coordinates ATP.

The protein belongs to the class-I aminoacyl-tRNA synthetase family. In terms of assembly, monomer. It depends on Zn(2+) as a cofactor.

The protein resides in the cytoplasm. It catalyses the reaction tRNA(Cys) + L-cysteine + ATP = L-cysteinyl-tRNA(Cys) + AMP + diphosphate. The polypeptide is Cysteine--tRNA ligase (cysS) (Chlamydia pneumoniae (Chlamydophila pneumoniae)).